The primary structure comprises 621 residues: ATP-dependent lipid A-core flippase (621 aa).

5 consecutive transmembrane segments (helical) span residues 32 to 52 (IVAA…LAAF), 91 to 111 (VWGT…LVVI), 192 to 212 (IVLL…FPLL), 286 to 306 (SPFS…IALW), and 312 to 332 (YTTI…YAPI). The region spanning 33–344 (VAALIAIFGV…LANISIPMQT (312 aa)) is the ABC transmembrane type-1 domain. Residues 378–611 (FRNVDVEYRS…NGYYTMLRNI (234 aa)) enclose the ABC transporter domain. 410–417 (GRSGSGKS) contacts ATP.

The protein belongs to the ABC transporter superfamily. Lipid exporter (TC 3.A.1.106) family. In terms of assembly, homodimer.

The protein resides in the cell inner membrane. It catalyses the reaction ATP + H2O + lipid A-core oligosaccharideSide 1 = ADP + phosphate + lipid A-core oligosaccharideSide 2.. In terms of biological role, involved in lipopolysaccharide (LPS) biosynthesis. Translocates lipid A-core from the inner to the outer leaflet of the inner membrane. Transmembrane domains (TMD) form a pore in the inner membrane and the ATP-binding domain (NBD) is responsible for energy generation. This Neisseria meningitidis serogroup B (strain ATCC BAA-335 / MC58) protein is ATP-dependent lipid A-core flippase.